We begin with the raw amino-acid sequence, 242 residues long: Protein unc-119 homolog B-A (242 aa).

The segment covering 1-20 (MSGSKREAALTGQPKDERKK) has biased composition (basic and acidic residues). The disordered stretch occupies residues 1-49 (MSGSKREAALTGQPKDERKKSGGGVINRLKARRVQGKESGTSDQSSVTP). Over residues 38-48 (ESGTSDQSSVT) the composition is skewed to polar residues. Position 133 (tyrosine 133) interacts with tetradecanoate.

Belongs to the PDE6D/unc-119 family.

Functionally, myristoyl-binding protein that acts as a cargo adapter: specifically binds the myristoyl moiety of a subset of N-terminally myristoylated proteins and is required for their localization. Plays a key role in localization of proteins to the primary cilium membrane. This Xenopus laevis (African clawed frog) protein is Protein unc-119 homolog B-A (unc119b-a).